A 357-amino-acid polypeptide reads, in one-letter code: 3-dehydroquinate synthase (357 aa).

Residues 104–108 (GVVGD), 128–129 (TT), K141, and 168–171 (FLET) each bind NAD(+). E183, H243, and H260 together coordinate Zn(2+).

This sequence belongs to the sugar phosphate cyclases superfamily. Dehydroquinate synthase family. Co(2+) serves as cofactor. Zn(2+) is required as a cofactor. It depends on NAD(+) as a cofactor.

It localises to the cytoplasm. It catalyses the reaction 7-phospho-2-dehydro-3-deoxy-D-arabino-heptonate = 3-dehydroquinate + phosphate. Its pathway is metabolic intermediate biosynthesis; chorismate biosynthesis; chorismate from D-erythrose 4-phosphate and phosphoenolpyruvate: step 2/7. In terms of biological role, catalyzes the conversion of 3-deoxy-D-arabino-heptulosonate 7-phosphate (DAHP) to dehydroquinate (DHQ). This is 3-dehydroquinate synthase from Streptococcus pyogenes serotype M5 (strain Manfredo).